Consider the following 1111-residue polypeptide: ATP-dependent DNA helicase mph1 (1111 aa).

Composition is skewed to acidic residues over residues 1–18 and 47–65; these read MSVS…EIDD and VFDE…DEFQ. Disordered stretches follow at residues 1–81, 101–144, 210–240, and 259–280; these read MSVS…EDVE, FVTQ…HQPD, AFDS…RTNR, and IPSQ…PTHH. Polar residues-rich tracts occupy residues 132-143 and 215-238; these read PTTTTVDASHQP and LSLS…QFRT. Residues 306–474 form the Helicase ATP-binding domain; sequence IAQRGLFHNL…AVIDGLGIAK (169 aa). Residue 319–326 coordinates ATP; sequence LPTGLGKT. A DEAH box motif is present at residues 422–425; sequence DEAH. The Helicase C-terminal domain maps to 644–818; sequence YLKQVVLNHF…GTRFTFHDDT (175 aa). 3 disordered regions span residues 836–898, 998–1047, and 1092–1111; these read IDIP…RKPT, SVLS…CTPE, and AERH…DTEE. The span at 852–864 shows a compositional bias: basic residues; the sequence is KRARPPKRPPKKF.

This sequence belongs to the DEAD box helicase family. DEAH subfamily. FANCM sub-subfamily. As to quaternary structure, interacts with the MHF histone-fold complex to form the FANCM-MHF complex.

The protein resides in the nucleus. The catalysed reaction is ATP + H2O = ADP + phosphate + H(+). In terms of biological role, ATP-dependent DNA helicase involved in DNA damage repair by homologous recombination and in genome maintenance. Capable of unwinding D-loops. Plays a role in limiting crossover recombinants during mitotic DNA double-strand break (DSB) repair. Component of a FANCM-MHF complex which promotes gene conversion at blocked replication forks, probably by reversal of the stalled fork. In Neosartorya fischeri (strain ATCC 1020 / DSM 3700 / CBS 544.65 / FGSC A1164 / JCM 1740 / NRRL 181 / WB 181) (Aspergillus fischerianus), this protein is ATP-dependent DNA helicase mph1.